The chain runs to 267 residues: tRNA pseudouridine synthase A (267 aa).

Asp55 functions as the Nucleophile in the catalytic mechanism. Substrate is bound at residue Tyr109.

The protein belongs to the tRNA pseudouridine synthase TruA family.

The enzyme catalyses uridine(38/39/40) in tRNA = pseudouridine(38/39/40) in tRNA. Its function is as follows. Formation of pseudouridine at positions 38, 39 and 40 in the anticodon stem and loop of transfer RNAs. The chain is tRNA pseudouridine synthase A from Natronomonas pharaonis (strain ATCC 35678 / DSM 2160 / CIP 103997 / JCM 8858 / NBRC 14720 / NCIMB 2260 / Gabara) (Halobacterium pharaonis).